Consider the following 204-residue polypeptide: 3-isopropylmalate dehydratase small subunit (204 aa).

Belongs to the LeuD family. LeuD type 1 subfamily. As to quaternary structure, heterodimer of LeuC and LeuD.

The enzyme catalyses (2R,3S)-3-isopropylmalate = (2S)-2-isopropylmalate. Its pathway is amino-acid biosynthesis; L-leucine biosynthesis; L-leucine from 3-methyl-2-oxobutanoate: step 2/4. Catalyzes the isomerization between 2-isopropylmalate and 3-isopropylmalate, via the formation of 2-isopropylmaleate. This chain is 3-isopropylmalate dehydratase small subunit, found in Psychromonas ingrahamii (strain DSM 17664 / CCUG 51855 / 37).